The chain runs to 400 residues: Protein phosphatase methylesterase 1 (400 aa).

The disordered stretch occupies residues 1 to 72; that stretch reads MSDLQRTWAK…NQKLFARPQG (72 aa). A compositionally biased stretch (acidic residues) spans 19–28; the sequence is PFDEPQEEQG. Over residues 44-54 the composition is skewed to low complexity; sequence SSASSASSVSS. Polar residues predominate over residues 55–64; that stretch reads TGTIIPSPNQ. Catalysis depends on residues S202, D228, and H358.

The protein belongs to the AB hydrolase superfamily.

It carries out the reaction [phosphatase 2A protein]-C-terminal L-leucine methyl ester + H2O = [phosphatase 2A protein]-C-terminal L-leucine + methanol + H(+). Demethylates proteins that have been reversibly carboxymethylated. Demethylates the phosphatase PP2A catalytic subunit. This Gibberella zeae (strain ATCC MYA-4620 / CBS 123657 / FGSC 9075 / NRRL 31084 / PH-1) (Wheat head blight fungus) protein is Protein phosphatase methylesterase 1 (PPE1).